The sequence spans 449 residues: Packaging protein 1 (449 aa).

A disordered region spans residues 1-77; the sequence is METRGRRPAA…QPAKRGDMLD (77 aa). 171-178 contacts ATP; sequence GPTGCGKS. A DNA-binding region spans residues 440-449; sequence RAYRARKTPK.

Belongs to the adenoviridae packaging protein 1 family. In terms of assembly, homodimer. Part of a genome packaging complex composed of packaging proteins 1, 2 and 3; this complex specifically binds to the packaging sequence on the left end of viral genomic DNA and performs packaging of the viral genome. Interacts with protein 33K.

The protein localises to the virion. It localises to the host nucleus. Its subcellular location is the host nucleoplasm. It is found in the host nucleolus. In terms of biological role, component of the packaging machinery which encapsidates the viral DNA into preformed capsids and transcriptional activator of the viral major late promoter (MLP). Binds, along with packaging proteins 2 and 3, to the specific packaging sequence on the left end of viral genomic DNA and displays ATPase activity thereby providing the power stroke of the packaging machinery. The activity of packaging protein IVa2 is stimulated by protein 33K which acts as a terminase. May be the protein that pumps DNA into the capsid powered by ATP hydrolysis. Specifically binds to the 5'-CG-3' nucleotides of the repeats making up the packaging sequence. Component of the DEF-A and DEF-B transcription factors that bind downstream elements of the major late promoter (MLP), and stimulate transcription from the MLP after initiation of viral DNA replication. DEF-A is a heterodimer packaging proteins 1 and 2 and DEF-B is a homodimer of packaging protein 1. This chain is Packaging protein 1, found in Homo sapiens (Human).